A 163-amino-acid chain; its full sequence is Nucleotide-binding protein GTNG_0630 (163 aa).

The protein belongs to the YajQ family.

Its function is as follows. Nucleotide-binding protein. This chain is Nucleotide-binding protein GTNG_0630, found in Geobacillus thermodenitrificans (strain NG80-2).